Here is a 319-residue protein sequence, read N- to C-terminus: Acetyl-coenzyme A carboxylase carboxyl transferase subunit alpha (319 aa).

The region spanning 35–296 (DLDKEIKQLE…KQRLIEQLNE (262 aa)) is the CoA carboxyltransferase C-terminal domain.

This sequence belongs to the AccA family. As to quaternary structure, acetyl-CoA carboxylase is a heterohexamer composed of biotin carboxyl carrier protein (AccB), biotin carboxylase (AccC) and two subunits each of ACCase subunit alpha (AccA) and ACCase subunit beta (AccD).

The protein resides in the cytoplasm. It catalyses the reaction N(6)-carboxybiotinyl-L-lysyl-[protein] + acetyl-CoA = N(6)-biotinyl-L-lysyl-[protein] + malonyl-CoA. Its pathway is lipid metabolism; malonyl-CoA biosynthesis; malonyl-CoA from acetyl-CoA: step 1/1. Component of the acetyl coenzyme A carboxylase (ACC) complex. First, biotin carboxylase catalyzes the carboxylation of biotin on its carrier protein (BCCP) and then the CO(2) group is transferred by the carboxyltransferase to acetyl-CoA to form malonyl-CoA. The sequence is that of Acetyl-coenzyme A carboxylase carboxyl transferase subunit alpha from Aliivibrio salmonicida (strain LFI1238) (Vibrio salmonicida (strain LFI1238)).